A 305-amino-acid chain; its full sequence is Glycerol-3-phosphate dehydrogenase [NAD(P)+] (305 aa).

Residues phenylalanine 10, arginine 29, and lysine 87 each coordinate NADPH. The sn-glycerol 3-phosphate site is built by lysine 87, glycine 115, and serine 117. Alanine 119 contacts NADPH. 5 residues coordinate sn-glycerol 3-phosphate: lysine 170, aspartate 223, serine 233, arginine 234, and asparagine 235. Lysine 170 serves as the catalytic Proton acceptor. Residue arginine 234 coordinates NADPH. An NADPH-binding site is contributed by glutamate 255.

It belongs to the NAD-dependent glycerol-3-phosphate dehydrogenase family.

It is found in the cytoplasm. The enzyme catalyses sn-glycerol 3-phosphate + NAD(+) = dihydroxyacetone phosphate + NADH + H(+). The catalysed reaction is sn-glycerol 3-phosphate + NADP(+) = dihydroxyacetone phosphate + NADPH + H(+). Its pathway is membrane lipid metabolism; glycerophospholipid metabolism. In terms of biological role, catalyzes the reduction of the glycolytic intermediate dihydroxyacetone phosphate (DHAP) to sn-glycerol 3-phosphate (G3P), the key precursor for phospholipid synthesis. In Cereibacter sphaeroides (strain ATCC 17023 / DSM 158 / JCM 6121 / CCUG 31486 / LMG 2827 / NBRC 12203 / NCIMB 8253 / ATH 2.4.1.) (Rhodobacter sphaeroides), this protein is Glycerol-3-phosphate dehydrogenase [NAD(P)+].